A 391-amino-acid chain; its full sequence is Carbamoyl phosphate synthase small chain (391 aa).

A CPSase region spans residues 1 to 187 (MAGVKERAVL…PLPYAWPTLK (187 aa)). Residues serine 50, glycine 239, and glycine 241 each contribute to the L-glutamine site. The Glutamine amidotransferase type-1 domain occupies 191-376 (RIVVMDFGIK…LEEVEAFHGA (186 aa)). Residue cysteine 266 is the Nucleophile of the active site. Residues leucine 267, glutamine 270, asparagine 308, glycine 310, and tyrosine 311 each coordinate L-glutamine. Catalysis depends on residues histidine 349 and glutamate 351.

It belongs to the CarA family. Composed of two chains; the small (or glutamine) chain promotes the hydrolysis of glutamine to ammonia, which is used by the large (or ammonia) chain to synthesize carbamoyl phosphate. Tetramer of heterodimers (alpha,beta)4.

It carries out the reaction hydrogencarbonate + L-glutamine + 2 ATP + H2O = carbamoyl phosphate + L-glutamate + 2 ADP + phosphate + 2 H(+). The catalysed reaction is L-glutamine + H2O = L-glutamate + NH4(+). It functions in the pathway amino-acid biosynthesis; L-arginine biosynthesis; carbamoyl phosphate from bicarbonate: step 1/1. The protein operates within pyrimidine metabolism; UMP biosynthesis via de novo pathway; (S)-dihydroorotate from bicarbonate: step 1/3. Its function is as follows. Small subunit of the glutamine-dependent carbamoyl phosphate synthetase (CPSase). CPSase catalyzes the formation of carbamoyl phosphate from the ammonia moiety of glutamine, carbonate, and phosphate donated by ATP, constituting the first step of 2 biosynthetic pathways, one leading to arginine and/or urea and the other to pyrimidine nucleotides. The small subunit (glutamine amidotransferase) binds and cleaves glutamine to supply the large subunit with the substrate ammonia. The chain is Carbamoyl phosphate synthase small chain from Thermus thermophilus (strain ATCC BAA-163 / DSM 7039 / HB27).